A 340-amino-acid chain; its full sequence is Aldose 1-epimerase (340 aa).

Position 77 (Arg-77) interacts with substrate. His-172 (proton donor) is an active-site residue. Asp-243 lines the substrate pocket. Residue Glu-305 is the Proton acceptor of the active site.

Belongs to the aldose epimerase family.

It localises to the cytoplasm. The catalysed reaction is alpha-D-glucose = beta-D-glucose. Its pathway is carbohydrate metabolism; hexose metabolism. Its function is as follows. Mutarotase converts alpha-aldose to the beta-anomer. It is active on D-glucose, L-arabinose, D-xylose, D-galactose, maltose and lactose. The sequence is that of Aldose 1-epimerase (galM) from Haemophilus influenzae (strain ATCC 51907 / DSM 11121 / KW20 / Rd).